The following is a 354-amino-acid chain: Dual-specificity RNA methyltransferase RlmN (354 aa).

The active-site Proton acceptor is glutamate 89. In terms of domain architecture, Radical SAM core spans 106-339; the sequence is KEAKYTVCVS…CTIRKSKGMD (234 aa). An intrachain disulfide couples cysteine 113 to cysteine 344. The [4Fe-4S] cluster site is built by cysteine 120, cysteine 124, and cysteine 127. Residues 170–171, serine 202, 225–227, and asparagine 301 contribute to the S-adenosyl-L-methionine site; these read GE and SLH. Cysteine 344 acts as the S-methylcysteine intermediate in catalysis.

Belongs to the radical SAM superfamily. RlmN family. [4Fe-4S] cluster is required as a cofactor.

The protein localises to the cytoplasm. It carries out the reaction adenosine(2503) in 23S rRNA + 2 reduced [2Fe-2S]-[ferredoxin] + 2 S-adenosyl-L-methionine = 2-methyladenosine(2503) in 23S rRNA + 5'-deoxyadenosine + L-methionine + 2 oxidized [2Fe-2S]-[ferredoxin] + S-adenosyl-L-homocysteine. It catalyses the reaction adenosine(37) in tRNA + 2 reduced [2Fe-2S]-[ferredoxin] + 2 S-adenosyl-L-methionine = 2-methyladenosine(37) in tRNA + 5'-deoxyadenosine + L-methionine + 2 oxidized [2Fe-2S]-[ferredoxin] + S-adenosyl-L-homocysteine. Functionally, specifically methylates position 2 of adenine 2503 in 23S rRNA and position 2 of adenine 37 in tRNAs. m2A2503 modification seems to play a crucial role in the proofreading step occurring at the peptidyl transferase center and thus would serve to optimize ribosomal fidelity. The chain is Dual-specificity RNA methyltransferase RlmN from Nautilia profundicola (strain ATCC BAA-1463 / DSM 18972 / AmH).